The chain runs to 248 residues: Probable septum site-determining protein MinC (248 aa).

The tract at residues 115–144 (PTAVSPPPPPPPPARAEPAPPAARPAPGRM) is disordered. Pro residues predominate over residues 118–138 (VSPPPPPPPPARAEPAPPAAR).

This sequence belongs to the MinC family. In terms of assembly, interacts with MinD and FtsZ.

Its function is as follows. Cell division inhibitor that blocks the formation of polar Z ring septums. Rapidly oscillates between the poles of the cell to destabilize FtsZ filaments that have formed before they mature into polar Z rings. Prevents FtsZ polymerization. The chain is Probable septum site-determining protein MinC from Xanthomonas euvesicatoria pv. vesicatoria (strain 85-10) (Xanthomonas campestris pv. vesicatoria).